Here is a 151-residue protein sequence, read N- to C-terminus: Prefoldin subunit alpha (151 aa).

A disordered region spans residues 120-151; that stretch reads TVEEETASLEEKAQQAQQQQMQQLQQMQQEDE. Over residues 133–151 the composition is skewed to low complexity; the sequence is QQAQQQQMQQLQQMQQEDE.

Belongs to the prefoldin subunit alpha family. Heterohexamer of two alpha and four beta subunits.

Its subcellular location is the cytoplasm. Functionally, molecular chaperone capable of stabilizing a range of proteins. Seems to fulfill an ATP-independent, HSP70-like function in archaeal de novo protein folding. The polypeptide is Prefoldin subunit alpha (Natronomonas pharaonis (strain ATCC 35678 / DSM 2160 / CIP 103997 / JCM 8858 / NBRC 14720 / NCIMB 2260 / Gabara) (Halobacterium pharaonis)).